A 179-amino-acid polypeptide reads, in one-letter code: MAVSFSLVGAFKGLSLASSSSFLKGDFGAAFPVAPKFSVSFPLKSPLTIESAHKKGAGSTKNGRDSPGQRLGVKIFGDQVAKPGSIIVRQRGTKFHPGKNVGLGKDHTIFSLIDGLVKFEKFGPDRKKISVYPREVQPENPNSYRNRKRESFRLQRERRKARREGVILQSSVDTCFCCC.

A chloroplast-targeting transit peptide spans 1–51; that stretch reads MAVSFSLVGAFKGLSLASSSSFLKGDFGAAFPVAPKFSVSFPLKSPLTIES.

Belongs to the bacterial ribosomal protein bL27 family. As to quaternary structure, part of the 50S ribosomal subunit.

It localises to the plastid. The protein localises to the chloroplast. In Nicotiana tabacum (Common tobacco), this protein is Large ribosomal subunit protein bL27c (RPL27).